Consider the following 323-residue polypeptide: Chitinase 1 (323 aa).

An N-terminal signal peptide occupies residues 1–20 (MRALAVVVVATAFAVVAVRG). Residues 21-61 (EQCGSQAGGALCPNCLCCSQYGWCGSTSAYCGSGCQSQCSG) form the Chitin-binding type-1 domain. 8 disulfides stabilise this stretch: cysteine 23–cysteine 38, cysteine 32–cysteine 44, cysteine 35–cysteine 63, cysteine 37–cysteine 51, cysteine 55–cysteine 59, cysteine 100–cysteine 162, cysteine 176–cysteine 184, and cysteine 283–cysteine 315. Catalysis depends on glutamate 144, which acts as the Proton donor.

The protein belongs to the glycosyl hydrolase 19 family. Chitinase class I subfamily. Expressed in roots, leaves, sheaths and meristems.

The catalysed reaction is Random endo-hydrolysis of N-acetyl-beta-D-glucosaminide (1-&gt;4)-beta-linkages in chitin and chitodextrins.. Its function is as follows. Hydrolyzes chitin and may play a role in defense against fungal pathogens containing chitin. This is Chitinase 1 (Cht1) from Oryza sativa subsp. japonica (Rice).